A 72-amino-acid polypeptide reads, in one-letter code: Crustacean hyperglycemic hormone (72 aa).

Gln-1 carries the pyrrolidone carboxylic acid modification. D-phenylalanine; in form CHH-II is present on Phe-3. 3 cysteine pairs are disulfide-bonded: Cys-7-Cys-43, Cys-23-Cys-39, and Cys-26-Cys-52. Residue Val-72 is modified to Valine amide.

In terms of processing, stereoinversion of L-Phe (in CHH-I) to D-Phe (in CHH-II) the two forms are present in a ratio 3:1 (CHH-I/CHH-II). Produced by the medulla terminalis X-organ in the eyestalks and transported to the sinus gland where they are stored and released.

Its subcellular location is the secreted. In terms of biological role, hormone found in the sinus gland of isopods and decapods which controls the blood sugar level. Has a secretagogue action over the amylase released from the midgut gland. May act as a stress hormone and may be involved in the control of molting and reproduction. The chain is Crustacean hyperglycemic hormone from Procambarus bouvieri (Mexican crayfish).